The chain runs to 364 residues: Pectinesterase 1 (364 aa).

Residues 1–22 form the signal peptide; it reads MSCIAVEAVLLGILLYIPIVLS. Asparagine 103 carries N-linked (GlcNAc...) asparagine glycosylation. Residue aspartate 220 is part of the active site.

It belongs to the pectinesterase family. Post-translationally, glycosylated. Expressed in pollen.

It is found in the secreted. It catalyses the reaction [(1-&gt;4)-alpha-D-galacturonosyl methyl ester](n) + n H2O = [(1-&gt;4)-alpha-D-galacturonosyl](n) + n methanol + n H(+). It participates in glycan metabolism; pectin degradation; 2-dehydro-3-deoxy-D-gluconate from pectin: step 1/5. Its function is as follows. Catalyzes the demethylesterification of homogalacturonan components of pectin. May be involved in pollen tube development. This is Pectinesterase 1 from Olea europaea (Common olive).